The sequence spans 327 residues: 2-methoxy-6-polyprenyl-1,4-benzoquinol methylase, mitochondrial (327 aa).

A mitochondrion-targeting transit peptide spans 1 to 49; that stretch reads MAAPRSCALWSYCGRGWSWAMRGCQLLGLRSSWPGAPLSARLLPQEKRA. S-adenosyl-L-methionine is bound by residues threonine 117, aspartate 171, and 199 to 200; that span reads DA.

The protein belongs to the class I-like SAM-binding methyltransferase superfamily. MenG/UbiE family. In terms of assembly, component of a multi-subunit COQ enzyme complex, composed of at least COQ3, COQ4, COQ5, COQ6, COQ7 and COQ9. Interacts with PYURF; the interaction is direct, stabilizes COQ5 protein and associates PYURF with COQ enzyme complex.

It is found in the mitochondrion inner membrane. The enzyme catalyses 2-methoxy-6-(all-trans-decaprenyl)benzene-1,4-diol + S-adenosyl-L-methionine = 5-methoxy-2-methyl-3-(all-trans-decaprenyl)benzene-1,4-diol + S-adenosyl-L-homocysteine + H(+). The protein operates within cofactor biosynthesis; ubiquinone biosynthesis. Methyltransferase required for the conversion of 2-decaprenyl-6-methoxy-1,4-benzoquinol (DDMQH2) to 2-decaprenyl-3-methyl-6-methoxy-1,4-benzoquinol (DMQH2). The sequence is that of 2-methoxy-6-polyprenyl-1,4-benzoquinol methylase, mitochondrial from Pongo abelii (Sumatran orangutan).